The primary structure comprises 523 residues: 2-isopropylmalate synthase (523 aa).

The Pyruvate carboxyltransferase domain maps to 5-267 (VIIFDTTLRD…HTAINHQEIW (263 aa)). Residues aspartate 14, histidine 202, histidine 204, and asparagine 238 each coordinate Mn(2+). Positions 392 to 523 (RLDYFSVQSG…QHNENNKETV (132 aa)) are regulatory domain.

This sequence belongs to the alpha-IPM synthase/homocitrate synthase family. LeuA type 1 subfamily. In terms of assembly, homodimer. Mn(2+) serves as cofactor.

The protein resides in the cytoplasm. It catalyses the reaction 3-methyl-2-oxobutanoate + acetyl-CoA + H2O = (2S)-2-isopropylmalate + CoA + H(+). Its pathway is amino-acid biosynthesis; L-leucine biosynthesis; L-leucine from 3-methyl-2-oxobutanoate: step 1/4. Functionally, catalyzes the condensation of the acetyl group of acetyl-CoA with 3-methyl-2-oxobutanoate (2-ketoisovalerate) to form 3-carboxy-3-hydroxy-4-methylpentanoate (2-isopropylmalate). The protein is 2-isopropylmalate synthase of Shigella sonnei (strain Ss046).